Reading from the N-terminus, the 225-residue chain is CRISPR pre-crRNA endoribonuclease Cas5d (225 aa).

This sequence belongs to the CRISPR-associated protein Cas5 family. Subtype I-C/Dvulg subfamily. It depends on Does not require a metal cofactor. as a cofactor.

Its function is as follows. CRISPR (clustered regularly interspaced short palindromic repeat) is an adaptive immune system that provides protection against mobile genetic elements (viruses, transposable elements and conjugative plasmids). CRISPR clusters contain spacers, sequences complementary to antecedent mobile elements, and target invading nucleic acids. CRISPR clusters are transcribed and processed into CRISPR RNA (crRNA). This protein is a sequence-specific endonuclease that cleaves pre-crRNA at G21 into mature crRNA. Does not cleave pre-crRNA associated with the T.thermophilus strain HB27 Cas5 protein (AC Q746C2) CRISPR locus. The reaction mechanism may proceed by an intramolecular attack of the 2'-hydroxyl group of G21 on the scissile phosphodiester, cutting the precursor 3' to G21 residue yielding 5'-hydroxyl and 2' and/or 3' ends lacking a hydroxyl group (perhaps a 2'/3' cyclic phosphodiester). The polypeptide is CRISPR pre-crRNA endoribonuclease Cas5d (Mannheimia succiniciproducens (strain KCTC 0769BP / MBEL55E)).